We begin with the raw amino-acid sequence, 92 residues long: Large ribosomal subunit protein eL43 (92 aa).

Zn(2+) is bound by residues Cys39, Cys42, Cys57, and Cys60. Residues Cys39–Cys60 form a C4-type zinc finger.

This sequence belongs to the eukaryotic ribosomal protein eL43 family. In terms of assembly, component of the large ribosomal subunit.

It localises to the cytoplasm. Its function is as follows. Component of the large ribosomal subunit. The ribosome is a large ribonucleoprotein complex responsible for the synthesis of proteins in the cell. The protein is Large ribosomal subunit protein eL43 (Rpl37a) of Mus musculus (Mouse).